We begin with the raw amino-acid sequence, 97 residues long: Nucleoid-associated protein HPP12_0031 (97 aa).

This sequence belongs to the YbaB/EbfC family. Homodimer.

Its subcellular location is the cytoplasm. It is found in the nucleoid. Its function is as follows. Binds to DNA and alters its conformation. May be involved in regulation of gene expression, nucleoid organization and DNA protection. In Helicobacter pylori (strain P12), this protein is Nucleoid-associated protein HPP12_0031.